Reading from the N-terminus, the 117-residue chain is Conotoxin vil14.2 (117 aa).

The N-terminal stretch at 1–22 (MGFRVLVLVVMATTFALPFTFF) is a signal peptide. Residues 23-90 (EEPGRSPFRP…FAELSVGQRR (68 aa)) constitute a propeptide that is removed on maturation. Residues 53-77 (RADGQPPDMRQPEMRRPEMRRPEVR) are disordered. The span at 62–77 (RQPEMRRPEMRRPEVR) shows a compositional bias: basic and acidic residues. Disulfide bonds link C96/C116 and C100/C112.

Belongs to the conotoxin R superfamily. In terms of tissue distribution, expressed by the venom duct.

The protein resides in the secreted. This is Conotoxin vil14.2 from Conus villepinii (Villepin's cone).